The sequence spans 177 residues: Adenine phosphoribosyltransferase (177 aa).

Belongs to the purine/pyrimidine phosphoribosyltransferase family. Homodimer.

Its subcellular location is the cytoplasm. It catalyses the reaction AMP + diphosphate = 5-phospho-alpha-D-ribose 1-diphosphate + adenine. It functions in the pathway purine metabolism; AMP biosynthesis via salvage pathway; AMP from adenine: step 1/1. In terms of biological role, catalyzes a salvage reaction resulting in the formation of AMP, that is energically less costly than de novo synthesis. In Idiomarina loihiensis (strain ATCC BAA-735 / DSM 15497 / L2-TR), this protein is Adenine phosphoribosyltransferase.